We begin with the raw amino-acid sequence, 259 residues long: Small ribosomal subunit protein eS1 (259 aa).

Belongs to the eukaryotic ribosomal protein eS1 family. As to quaternary structure, component of the small ribosomal subunit. Mature ribosomes consist of a small (40S) and a large (60S) subunit. The 40S subunit contains about 33 different proteins and 1 molecule of RNA (18S). The 60S subunit contains about 49 different proteins and 3 molecules of RNA (25S, 5.8S and 5S).

It localises to the cytoplasm. This Monosiga brevicollis (Choanoflagellate) protein is Small ribosomal subunit protein eS1.